Reading from the N-terminus, the 360-residue chain is GTP 3',8-cyclase (360 aa).

The Radical SAM core domain maps to 33 to 251 (RFGRSATDLR…LQPHFRLRPD (219 aa)). Arginine 42 serves as a coordination point for GTP. [4Fe-4S] cluster-binding residues include cysteine 49 and cysteine 53. Position 55 (tyrosine 55) interacts with S-adenosyl-L-methionine. [4Fe-4S] cluster is bound at residue cysteine 56. Arginine 93 contacts GTP. Residue glycine 97 participates in S-adenosyl-L-methionine binding. Threonine 124 contacts GTP. S-adenosyl-L-methionine is bound at residue serine 148. Lysine 185 lines the GTP pocket. Methionine 219 provides a ligand contact to S-adenosyl-L-methionine. Positions 287 and 290 each coordinate [4Fe-4S] cluster. 292–294 (RTR) serves as a coordination point for GTP. Cysteine 304 contacts [4Fe-4S] cluster.

This sequence belongs to the radical SAM superfamily. MoaA family. Monomer and homodimer. Requires [4Fe-4S] cluster as cofactor.

It carries out the reaction GTP + AH2 + S-adenosyl-L-methionine = (8S)-3',8-cyclo-7,8-dihydroguanosine 5'-triphosphate + 5'-deoxyadenosine + L-methionine + A + H(+). Its pathway is cofactor biosynthesis; molybdopterin biosynthesis. Its function is as follows. Catalyzes the cyclization of GTP to (8S)-3',8-cyclo-7,8-dihydroguanosine 5'-triphosphate. This chain is GTP 3',8-cyclase, found in Mycobacterium marinum (strain ATCC BAA-535 / M).